The following is a 281-amino-acid chain: Pantothenate synthetase (281 aa).

17 to 24 (MGFLHEGH) is a binding site for ATP. The active-site Proton donor is the H24. A (R)-pantoate-binding site is contributed by Q48. Residue Q48 coordinates beta-alanine. 134 to 137 (GEKD) lines the ATP pocket. Q140 provides a ligand contact to (R)-pantoate. ATP-binding positions include V163 and 176 to 179 (LSSR).

It belongs to the pantothenate synthetase family. In terms of assembly, homodimer.

It is found in the cytoplasm. It catalyses the reaction (R)-pantoate + beta-alanine + ATP = (R)-pantothenate + AMP + diphosphate + H(+). It functions in the pathway cofactor biosynthesis; (R)-pantothenate biosynthesis; (R)-pantothenate from (R)-pantoate and beta-alanine: step 1/1. Its function is as follows. Catalyzes the condensation of pantoate with beta-alanine in an ATP-dependent reaction via a pantoyl-adenylate intermediate. The protein is Pantothenate synthetase of Deinococcus radiodurans (strain ATCC 13939 / DSM 20539 / JCM 16871 / CCUG 27074 / LMG 4051 / NBRC 15346 / NCIMB 9279 / VKM B-1422 / R1).